Here is a 394-residue protein sequence, read N- to C-terminus: Elongation factor Tu (394 aa).

One can recognise a tr-type G domain in the interval Lys-10–Gln-204. Residues Gly-19 to Thr-26 are G1. Gly-19–Thr-26 serves as a coordination point for GTP. Mg(2+) is bound at residue Thr-26. The G2 stretch occupies residues Gly-60–Asn-64. A G3 region spans residues Asp-81–Gly-84. GTP-binding positions include Asp-81–His-85 and Asn-136–Asp-139. Positions Asn-136–Asp-139 are G4. The segment at Ser-174–Leu-176 is G5.

It belongs to the TRAFAC class translation factor GTPase superfamily. Classic translation factor GTPase family. EF-Tu/EF-1A subfamily. In terms of assembly, monomer.

Its subcellular location is the cytoplasm. The enzyme catalyses GTP + H2O = GDP + phosphate + H(+). Its function is as follows. GTP hydrolase that promotes the GTP-dependent binding of aminoacyl-tRNA to the A-site of ribosomes during protein biosynthesis. The protein is Elongation factor Tu of Hamiltonella defensa subsp. Acyrthosiphon pisum (strain 5AT).